The primary structure comprises 218 residues: Small ribosomal subunit protein uS3c (218 aa).

A KH type-2 domain is found at 47–118 (VQKQIKNSSN…KIQITLKNVL (72 aa)).

Belongs to the universal ribosomal protein uS3 family. Part of the 30S ribosomal subunit.

It localises to the plastid. The protein resides in the chloroplast. This chain is Small ribosomal subunit protein uS3c (rps3), found in Angiopteris evecta (Mule's foot fern).